A 134-amino-acid chain; its full sequence is Peroxisomal testis-specific protein 1 (134 aa).

A Microbody targeting signal motif is present at residues 131-134 (NHLL).

It is found in the peroxisome. The polypeptide is Peroxisomal testis-specific protein 1 (PXT1) (Homo sapiens (Human)).